A 196-amino-acid polypeptide reads, in one-letter code: Probable nicotinate-nucleotide adenylyltransferase (196 aa).

It belongs to the NadD family.

The catalysed reaction is nicotinate beta-D-ribonucleotide + ATP + H(+) = deamido-NAD(+) + diphosphate. The protein operates within cofactor biosynthesis; NAD(+) biosynthesis; deamido-NAD(+) from nicotinate D-ribonucleotide: step 1/1. In terms of biological role, catalyzes the reversible adenylation of nicotinate mononucleotide (NaMN) to nicotinic acid adenine dinucleotide (NaAD). This is Probable nicotinate-nucleotide adenylyltransferase from Thermotoga petrophila (strain ATCC BAA-488 / DSM 13995 / JCM 10881 / RKU-1).